A 178-amino-acid polypeptide reads, in one-letter code: MQSADNLIWIDLEMTGLDVDSCKIIEIAAIITDKDLNIIAEAEPIAIHQSDEILNSMNEWCIKVHCETGLTQRVKDSKISTEAAEQQILEFIRKFVPYQSSPLCGNSIWQDRRFLAKYMPKIDEYCHYRMLDVTTLKLLNQYWGDGKGFEKKNTHKALDDIRESIAELKFYRQKLLSI.

The Exonuclease domain maps to 7–168 (LIWIDLEMTG…DDIRESIAEL (162 aa)). Tyr128 is an active-site residue.

Belongs to the oligoribonuclease family.

The protein localises to the cytoplasm. 3'-to-5' exoribonuclease specific for small oligoribonucleotides. The polypeptide is Oligoribonuclease (Francisella tularensis subsp. novicida (strain U112)).